We begin with the raw amino-acid sequence, 754 residues long: FAD-dependent monooxygenase ntnA (754 aa).

The chain crosses the membrane as a helical span at residues 3-23 (IPFKVLIIGGGVAGLTLAIML). FAD-binding residues include E34, G48, and R109. Residue Y218 is part of the active site. D311 and A324 together coordinate FAD. 4 helical membrane-spanning segments follow: residues 446-466 (PLAT…PWLA), 486-506 (AEVL…MWVI), 536-556 (ILPI…YYYM), and 563-583 (LGVA…SAVC). The N-linked (GlcNAc...) asparagine glycan is linked to N586. The chain crosses the membrane as a helical span at residues 595–615 (SWWFTADFAFPVVAYLSGMFL). An N-linked (GlcNAc...) asparagine glycan is attached at N616. The next 2 membrane-spanning stretches (helical) occupy residues 644–664 (IAFV…TTIL) and 679–697 (LASL…AWEL). Residue N701 is glycosylated (N-linked (GlcNAc...) asparagine). Residues 712 to 732 (LTILSSTIFGGPAATLAGTFI) form a helical membrane-spanning segment.

The protein belongs to the paxM FAD-dependent monooxygenase family. FAD serves as cofactor.

It is found in the membrane. It participates in secondary metabolite biosynthesis; terpenoid biosynthesis. Functionally, FAD-dependent monooxygenase; part of the gene cluster that mediates the biosynthesis of the meroterpenoids nectripenoids A and B, as well as cochliquninone D and isocochliquninone E. The pathway probably begins with the HR-PKS ntnH that catalyzes two chain-extension steps to form a reduced triketide, which then primes the SAT domain in the NR-PKS ntnG to initiate three more cycles of extension to give a linear hexaketide corresponding to the polyketide part of nectripenoids. The FAD-dependent monooxygenase ntnJ then performs an oxidative decarboxylation at C11 of the ntnH/ntnG product, via an electrophilic aromatic hydroxylation with concomitant ipso-decarboxylation. The membrane-bound polyprenyl transferase ntnF then introduces a farnesyl group before the FAD-dependent monooxygenase ntnK functions as the first epoxidase on terminal C12'-C13' olefin, followed by a second epoxidation on C7'-C8' catalyzed by ntnA. The terpene cyclase/mutase ntnI then initiates the sequential tricyclic ring formation through protonation of the terminal epoxide and catalyzes the regioselective and stereoselective 6/6/6-tricyclic ring formation. The cytochrome P450 monooxygenase ntnM may then hydroxylate C1'. This chain is FAD-dependent monooxygenase ntnA, found in Nectria sp.